Consider the following 527-residue polypeptide: Peptide chain release factor 3 (527 aa).

The 269-residue stretch at A9–L277 folds into the tr-type G domain. GTP contacts are provided by residues S18 to T25, D86 to H90, and N140 to D143.

The protein belongs to the TRAFAC class translation factor GTPase superfamily. Classic translation factor GTPase family. PrfC subfamily.

Its subcellular location is the cytoplasm. In terms of biological role, increases the formation of ribosomal termination complexes and stimulates activities of RF-1 and RF-2. It binds guanine nucleotides and has strong preference for UGA stop codons. It may interact directly with the ribosome. The stimulation of RF-1 and RF-2 is significantly reduced by GTP and GDP, but not by GMP. The polypeptide is Peptide chain release factor 3 (Pseudomonas putida (strain ATCC 47054 / DSM 6125 / CFBP 8728 / NCIMB 11950 / KT2440)).